We begin with the raw amino-acid sequence, 284 residues long: D-tagatose-1,6-bisphosphate aldolase subunit GatY (284 aa).

D82 functions as the Proton donor in the catalytic mechanism. Zn(2+) is bound by residues H83 and H180. Position 181 (G181) interacts with dihydroxyacetone phosphate. H208 contacts Zn(2+). Residues G209–S211 and N230–T233 contribute to the dihydroxyacetone phosphate site.

It belongs to the class II fructose-bisphosphate aldolase family. TagBP aldolase GatY subfamily. Forms a complex with GatZ. The cofactor is Zn(2+).

It carries out the reaction D-tagatofuranose 1,6-bisphosphate = D-glyceraldehyde 3-phosphate + dihydroxyacetone phosphate. Its pathway is carbohydrate metabolism; D-tagatose 6-phosphate degradation; D-glyceraldehyde 3-phosphate and glycerone phosphate from D-tagatose 6-phosphate: step 2/2. Functionally, catalytic subunit of the tagatose-1,6-bisphosphate aldolase GatYZ, which catalyzes the reversible aldol condensation of dihydroxyacetone phosphate (DHAP or glycerone-phosphate) with glyceraldehyde 3-phosphate (G3P) to produce tagatose 1,6-bisphosphate (TBP). Requires GatZ subunit for full activity and stability. Is involved in the catabolism of galactitol. The chain is D-tagatose-1,6-bisphosphate aldolase subunit GatY from Salmonella typhi.